A 210-amino-acid chain; its full sequence is NADH dehydrogenase [ubiquinone] iron-sulfur protein 8, mitochondrial (210 aa).

The transit peptide at Met-1 to Ala-34 directs the protein to the mitochondrion. 4Fe-4S ferredoxin-type domains lie at Arg-102–Glu-131 and Thr-141–Asn-170. [4Fe-4S] cluster is bound by residues Cys-111, Cys-114, Cys-117, Cys-121, Cys-150, Cys-153, Cys-156, and Cys-160.

It belongs to the complex I 23 kDa subunit family. As to quaternary structure, core subunit of respiratory chain NADH dehydrogenase (Complex I) which is composed of 45 different subunits. This is a component of the iron-sulfur (IP) fragment of the enzyme. Interacts with RAB5IF. [4Fe-4S] cluster is required as a cofactor.

The protein resides in the mitochondrion inner membrane. It carries out the reaction a ubiquinone + NADH + 5 H(+)(in) = a ubiquinol + NAD(+) + 4 H(+)(out). Core subunit of the mitochondrial membrane respiratory chain NADH dehydrogenase (Complex I) which catalyzes electron transfer from NADH through the respiratory chain, using ubiquinone as an electron acceptor. Essential for the catalytic activity and assembly of complex I. The chain is NADH dehydrogenase [ubiquinone] iron-sulfur protein 8, mitochondrial (NDUFS8) from Gorilla gorilla gorilla (Western lowland gorilla).